We begin with the raw amino-acid sequence, 290 residues long: MNFGNVSTAMITPFDNKGNVDFQKLSTLIDYLLKNGTDSLVVAGTTGESPTLSTEEKIALFEYTVKEVNGRVPVIAGTGSNNTKDSIKLTKKAEEAGVDAVMLVTPYYNKPSQEGMYQHFKAIAAETSLPVMLYNVPGRTVASLAPETTIRLAADIPNVVAIKEASGDLEAITKIIAETPEDFYVYSGDDALTLPILSVGGRGVVSVASHIAGTDMQQMIKNYTNGQTANAALIHQKLLPIMKELFKAPNPAPVKTALQLRGLDVGSVRLPLVPLTEDERLSLSSTISEL.

Thr46 provides a ligand contact to pyruvate. Catalysis depends on Tyr134, which acts as the Proton donor/acceptor. Residue Lys163 is the Schiff-base intermediate with substrate of the active site. Pyruvate is bound at residue Val205.

The protein belongs to the DapA family. As to quaternary structure, homotetramer; dimer of dimers.

It is found in the cytoplasm. The catalysed reaction is L-aspartate 4-semialdehyde + pyruvate = (2S,4S)-4-hydroxy-2,3,4,5-tetrahydrodipicolinate + H2O + H(+). It functions in the pathway amino-acid biosynthesis; L-lysine biosynthesis via DAP pathway; (S)-tetrahydrodipicolinate from L-aspartate: step 3/4. Its function is as follows. Catalyzes the condensation of (S)-aspartate-beta-semialdehyde [(S)-ASA] and pyruvate to 4-hydroxy-tetrahydrodipicolinate (HTPA). In Bacillus subtilis (strain 168), this protein is 4-hydroxy-tetrahydrodipicolinate synthase.